The following is a 496-amino-acid chain: Lysosomal Pro-X carboxypeptidase (496 aa).

The first 21 residues, 1–21, serve as a signal peptide directing secretion; sequence MGRRALLLLLLSFLAPWTTIA. Positions 22–45 are excised as a propeptide; sequence LRPALRALGSLHLPTNPTSLPAVA. N-linked (GlcNAc...) asparagine glycans are attached at residues N47 and N101. S179 serves as the catalytic Charge relay system. The interval 194–334 is SKS domain; the sequence is HMVVGALAAS…QNIFQALNVY (141 aa). Intrachain disulfides connect C215–C372, C233–C310, C264–C343, and C364–C394. 3 N-linked (GlcNAc...) asparagine glycosylation sites follow: N317, N336, and N345. The N-linked (GlcNAc...) asparagine glycan is linked to N415. Residues D430 and H455 each act as charge relay system in the active site.

It belongs to the peptidase S28 family. In terms of assembly, homodimer.

The protein resides in the lysosome. It catalyses the reaction Cleavage of a -Pro-|-Xaa bond to release a C-terminal amino acid.. Cleaves C-terminal amino acids linked to proline in peptides such as angiotensin II, III and des-Arg9-bradykinin. This cleavage occurs at acidic pH, but enzymatic activity is retained with some substrates at neutral pH. This Pongo abelii (Sumatran orangutan) protein is Lysosomal Pro-X carboxypeptidase (PRCP).